We begin with the raw amino-acid sequence, 253 residues long: Small ribosomal subunit protein uS5 (253 aa).

Residues 1–30 form a disordered region; sequence MAESAPRGFGRGGRGGRGRGRGRRGAKRDE. Over residues 14–26 the composition is skewed to basic residues; it reads RGGRGRGRGRRGA. Residues 75 to 138 enclose the S5 DRBM domain; sequence LNDEVMKVVP…IMGKLSIMPI (64 aa).

It belongs to the universal ribosomal protein uS5 family. As to quaternary structure, component of the small ribosomal subunit (SSU). Mature yeast ribosomes consist of a small (40S) and a large (60S) subunit. The 40S small subunit contains 1 molecule of ribosomal RNA (18S rRNA) and at least 33 different proteins. The large 60S subunit contains 3 rRNA molecules (25S, 5.8S and 5S rRNA) and at least 46 different proteins. Interacts with snoRNA U3. Interacts with MPP10. Component of the ribosomal small subunit (SSU) processome composed of at least 40 protein subunits and snoRNA U3.

The protein resides in the cytoplasm. Its function is as follows. Component of the ribosome, a large ribonucleoprotein complex responsible for the synthesis of proteins in the cell. The small ribosomal subunit (SSU) binds messenger RNAs (mRNAs) and translates the encoded message by selecting cognate aminoacyl-transfer RNA (tRNA) molecules. The large subunit (LSU) contains the ribosomal catalytic site termed the peptidyl transferase center (PTC), which catalyzes the formation of peptide bonds, thereby polymerizing the amino acids delivered by tRNAs into a polypeptide chain. The nascent polypeptides leave the ribosome through a tunnel in the LSU and interact with protein factors that function in enzymatic processing, targeting, and the membrane insertion of nascent chains at the exit of the ribosomal tunnel. Plays a role in the assembly and function of the 40S ribosomal subunit. Mutations in this protein affects the control of translational fidelity. Involved in nucleolar processing of pre-18S ribosomal RNA and ribosome assembly. Functionally, component of the ribosome, a large ribonucleoprotein complex responsible for the synthesis of proteins in the cell. The small ribosomal subunit (SSU) binds messenger RNAs (mRNAs) and translates the encoded message by selecting cognate aminoacyl-transfer RNA (tRNA) molecules. The large subunit (LSU) contains the ribosomal catalytic site termed the peptidyl transferase center (PTC), which catalyzes the formation of peptide bonds, thereby polymerizing the amino acids delivered by tRNAs into a polypeptide chain. The nascent polypeptides leave the ribosome through a tunnel in the LSU and interact with protein factors that function in enzymatic processing, targeting, and the membrane insertion of nascent chains at the exit of the ribosomal tunnel. uS5 is important for the assembly and function of the 40S ribosomal subunit. Mutations in this protein affects the control of translational fidelity. Involved in nucleolar processing of pre-18S ribosomal RNA and ribosome assembly. The protein is Small ribosomal subunit protein uS5 (rps2) of Schizosaccharomyces pombe (strain 972 / ATCC 24843) (Fission yeast).